A 185-amino-acid chain; its full sequence is dCTP deaminase (185 aa).

107-112 serves as a coordination point for dCTP; sequence KSTYAR. The active-site Proton donor/acceptor is Glu133. DCTP-binding residues include Gln152, Tyr166, and Gln176.

Belongs to the dCTP deaminase family. In terms of assembly, homotrimer.

It carries out the reaction dCTP + H2O + H(+) = dUTP + NH4(+). It functions in the pathway pyrimidine metabolism; dUMP biosynthesis; dUMP from dCTP (dUTP route): step 1/2. Catalyzes the deamination of dCTP to dUTP. This Nitratiruptor sp. (strain SB155-2) protein is dCTP deaminase.